Here is a 466-residue protein sequence, read N- to C-terminus: GTPase Der (466 aa).

EngA-type G domains lie at 30-193 (PVVA…PEVS) and 203-376 (RRVA…ASWD). Residues 36-43 (GRPNVGKS), 83-87 (DTGGW), 145-148 (NKVD), 209-216 (GKPNVGKS), 256-260 (DTAGL), and 321-324 (NKWD) each bind GTP. The KH-like domain maps to 377–459 (TRIATGPLNS…PIRINVRVRE (83 aa)).

The protein belongs to the TRAFAC class TrmE-Era-EngA-EngB-Septin-like GTPase superfamily. EngA (Der) GTPase family. Associates with the 50S ribosomal subunit.

Functionally, GTPase that plays an essential role in the late steps of ribosome biogenesis. The polypeptide is GTPase Der (Mycolicibacterium paratuberculosis (strain ATCC BAA-968 / K-10) (Mycobacterium paratuberculosis)).